Reading from the N-terminus, the 414-residue chain is Arrestin domain-containing protein 3 (414 aa).

2 short sequence motifs (PPxY motif) span residues 346–349 (PPSY) and 391–394 (PPLY). The disordered stretch occupies residues 393–414 (LYSEIDPNPDQPADDRPSCPSR). The span at 405 to 414 (ADDRPSCPSR) shows a compositional bias: basic and acidic residues.

Belongs to the arrestin family. In terms of assembly, interacts (via PPxY motifs) with NEDD4 (via WW domains). Interacts with ADRB2. Interacts with ADRB3. Interacts with HGS (via PPxY motifs). Does not bind TXN (thioredoxin). Interacts with ITCH.

It localises to the cytoplasm. The protein resides in the cell membrane. Its subcellular location is the lysosome. It is found in the endosome. The protein localises to the early endosome. Its function is as follows. Adapter protein that plays a role in regulating cell-surface expression of adrenergic receptors and probably also other G protein-coupled receptors. Plays a role in NEDD4-mediated ubiquitination and endocytosis af activated ADRB2 and subsequent ADRB2 degradation. May recruit NEDD4 to ADRB2. Alternatively, may function as adapter protein that does not play a major role in recruiting NEDD4 to ADRB2, but rather plays a role in a targeting ADRB2 to endosomes. The polypeptide is Arrestin domain-containing protein 3 (ARRDC3) (Bos taurus (Bovine)).